The sequence spans 225 residues: Large ribosomal subunit protein eL15 (225 aa).

The interval 159 to 180 (RPFRGLTSAGKKMRGLRKSRGL) is disordered. Positions 169 to 180 (KKMRGLRKSRGL) are enriched in basic residues.

The protein belongs to the eukaryotic ribosomal protein eL15 family.

This is Large ribosomal subunit protein eL15 (rpl15e) from Aeropyrum pernix (strain ATCC 700893 / DSM 11879 / JCM 9820 / NBRC 100138 / K1).